The following is a 334-amino-acid chain: Amino acid--[acyl-carrier-protein] ligase 2 (334 aa).

Cys-131 provides a ligand contact to Zn(2+). ATP contacts are provided by residues Arg-159, Glu-161, and 168 to 169; that span reads RL. Residue Glu-176 coordinates Zn(2+). Glu-176 contributes to the an L-alpha-amino acid binding site. ATP is bound by residues Lys-235 and 250-253; that span reads ACMS. Cys-279 provides a ligand contact to Zn(2+). Arg-286 provides a ligand contact to ATP.

It belongs to the class-II aminoacyl-tRNA synthetase family. Amino acid--[acyl-carrier-protein] ligase subfamily. As to quaternary structure, homodimer. Zn(2+) is required as a cofactor.

It carries out the reaction an L-alpha-amino acid + holo-[ACP] + ATP = an L-alpha-aminoacyl-[ACP] + AMP + diphosphate. Functionally, catalyzes the ATP-dependent activation of L-glycine and its transfer to the phosphopantetheine prosthetic group covalently attached to the vicinal carrier protein blr6284 of yet unknown function. May participate in nonribosomal peptide synthesis or related processes. L-alanine is a poor substrate whereas L-serine or D-amino acids are not substrates for ATP-dependent activation. Does not display tRNA aminoacylation activity. The sequence is that of Amino acid--[acyl-carrier-protein] ligase 2 from Bradyrhizobium diazoefficiens (strain JCM 10833 / BCRC 13528 / IAM 13628 / NBRC 14792 / USDA 110).